We begin with the raw amino-acid sequence, 183 residues long: MKKKTTLSEEDQALFRQLMAGTRKIKQDTIVHRPQRKKISEVPVKRLIQEQADASHYFSDEFQPLLNTEGPVKYVRPDVSHFEAKKLRRGDYSPELFLDLHGLTQLQAKQELGALIAACRREHVFCACVMHGHGKHILKQQTPLWLAQHPHVMAFHQAPKEYGGDAALLVLIEVEEWLPPELT.

Residues 98–173 (LDLHGLTQLQ…GDAALLVLIE (76 aa)) enclose the Smr domain.

It belongs to the SmrB family. Associates with collided ribosomes, but not with correctly translating polysomes.

Functionally, acts as a ribosome collision sensor. Detects stalled/collided disomes (pairs of ribosomes where the leading ribosome is stalled and a second ribosome has collided with it) and endonucleolytically cleaves mRNA at the 5' boundary of the stalled ribosome. Stalled/collided disomes form a new interface (primarily via the 30S subunits) that binds SmrB. Cleaved mRNA becomes available for tmRNA ligation, leading to ribosomal subunit dissociation and rescue of stalled ribosomes. In Escherichia coli (strain 55989 / EAEC), this protein is Ribosome rescue factor SmrB.